We begin with the raw amino-acid sequence, 49 residues long: uncharacterized protein (49 aa).

This is an uncharacterized protein from Sulfolobus spindle-shape virus 1 (SSV1).